We begin with the raw amino-acid sequence, 140 residues long: Nucleoside diphosphate kinase (140 aa).

6 residues coordinate ATP: K10, F58, R86, T92, R103, and N113. The active-site Pros-phosphohistidine intermediate is H116.

It belongs to the NDK family. Homohexamer. The cofactor is Mg(2+).

The protein resides in the cytoplasm. The catalysed reaction is a 2'-deoxyribonucleoside 5'-diphosphate + ATP = a 2'-deoxyribonucleoside 5'-triphosphate + ADP. It catalyses the reaction a ribonucleoside 5'-diphosphate + ATP = a ribonucleoside 5'-triphosphate + ADP. In terms of biological role, major role in the synthesis of nucleoside triphosphates other than ATP. The ATP gamma phosphate is transferred to the NDP beta phosphate via a ping-pong mechanism, using a phosphorylated active-site intermediate. This is Nucleoside diphosphate kinase from Methanocaldococcus jannaschii (strain ATCC 43067 / DSM 2661 / JAL-1 / JCM 10045 / NBRC 100440) (Methanococcus jannaschii).